We begin with the raw amino-acid sequence, 389 residues long: 2-aminoethylphosphonate--pyruvate transaminase 1 (389 aa).

K196 carries the post-translational modification N6-(pyridoxal phosphate)lysine.

The protein belongs to the class-V pyridoxal-phosphate-dependent aminotransferase family. PhnW subfamily. Homodimer. The cofactor is pyridoxal 5'-phosphate.

The catalysed reaction is (2-aminoethyl)phosphonate + pyruvate = phosphonoacetaldehyde + L-alanine. Its function is as follows. Involved in phosphonate degradation. The sequence is that of 2-aminoethylphosphonate--pyruvate transaminase 1 from Paraburkholderia xenovorans (strain LB400).